A 148-amino-acid chain; its full sequence is Snaclec 27 (148 aa).

A signal peptide spans 1–23 (WGDSSSSASACWSCFSLVSGIGA). 3 cysteine pairs are disulfide-bonded: cysteine 27/cysteine 38, cysteine 55/cysteine 144, and cysteine 121/cysteine 136. The C-type lectin domain occupies 34 to 145 (HEGHCYKVFS…CSSTQQFVCK (112 aa)).

Belongs to the snaclec family. In terms of assembly, heterodimer; disulfide-linked. As to expression, expressed by the venom gland.

It localises to the secreted. Interferes with one step of hemostasis (modulation of platelet aggregation, or coagulation cascade, for example). In Echis ocellatus (Ocellated saw-scaled viper), this protein is Snaclec 27.